A 160-amino-acid polypeptide reads, in one-letter code: Endoplasmic reticulum transmembrane protein 2 (160 aa).

The Lumenal segment spans residues 1–2 (MG). Residues 3–23 (VYLAVLFSLLVIEMAILFILV) traverse the membrane as a helical segment. Residues 24 to 45 (LPLPQRMRRWLYIRYSIISTNK) are Cytoplasmic-facing. A helical membrane pass occupies residues 46–66 (KFRTYMVGIMIFVGLLFIDSW). The Lumenal portion of the chain corresponds to 67–103 (KRSQIRVSTYRNQKNPYIINSVTPVDALASRAYNQRN). The chain crosses the membrane as a helical span at residues 104–124 (VYISGFIIYFYICILTVMSIL). The Cytoplasmic segment spans residues 125–160 (RRIVEWNDKMKAGDDILKEKLRRKQKYLEELQKKKF). The short motif at 157–160 (KKKF) is the Di-lysine motif element.

Belongs to the BCAP29/BCAP31 family.

It is found in the endoplasmic reticulum membrane. May play a role in anterograde transport of membrane proteins from the endoplasmic reticulum to the Golgi. This chain is Endoplasmic reticulum transmembrane protein 2 (YET2), found in Saccharomyces cerevisiae (strain ATCC 204508 / S288c) (Baker's yeast).